The sequence spans 207 residues: Outer-membrane lipoprotein LolB (207 aa).

A signal peptide spans 1–21 (MPLPDFRLIRLLPLAALVLTA). Cys-22 carries N-palmitoyl cysteine lipidation. Cys-22 carries the S-diacylglycerol cysteine lipid modification.

Belongs to the LolB family. Monomer.

It is found in the cell outer membrane. Functionally, plays a critical role in the incorporation of lipoproteins in the outer membrane after they are released by the LolA protein. This chain is Outer-membrane lipoprotein LolB, found in Escherichia coli (strain K12 / MC4100 / BW2952).